Consider the following 318-residue polypeptide: Mitochondrial thiamine pyrophosphate carrier 1 (318 aa).

The next 6 membrane-spanning stretches (helical) occupy residues 12–28 (GTRR…GLVS), 91–107 (LMYV…YRTT), 125–141 (SFVA…ASTY), 181–197 (GCSA…GLFF), 221–237 (AAGV…VFPL), and 284–301 (GLTV…VTMW). 3 Solcar repeats span residues 12-110 (GTRR…TTQA), 120-206 (PPPA…LRPV), and 214-309 (PFGS…SLHY).

Belongs to the mitochondrial carrier (TC 2.A.29) family.

Its subcellular location is the mitochondrion inner membrane. In terms of biological role, mitochondrial transporter that mediates uptake of thiamine pyrophosphate (ThPP) into mitochondria. This is Mitochondrial thiamine pyrophosphate carrier 1 (tpc1) from Aspergillus oryzae (strain ATCC 42149 / RIB 40) (Yellow koji mold).